We begin with the raw amino-acid sequence, 70 residues long: uncharacterized protein (70 aa).

This is an uncharacterized protein from Escherichia coli (strain K12).